Consider the following 209-residue polypeptide: NADH-ubiquinone oxidoreductase subunit 9 (209 aa).

Belongs to the complex I 30 kDa subunit family. As to quaternary structure, complex I is composed of about 30 different subunits.

The protein resides in the mitochondrion inner membrane. It carries out the reaction a ubiquinone + NADH + 5 H(+)(in) = a ubiquinol + NAD(+) + 4 H(+)(out). Functionally, core subunit of the mitochondrial membrane respiratory chain NADH dehydrogenase (Complex I) that is believed to belong to the minimal assembly required for catalysis. Complex I functions in the transfer of electrons from NADH to the respiratory chain. The immediate electron acceptor for the enzyme is believed to be ubiquinone. This is NADH-ubiquinone oxidoreductase subunit 9 (NAD9) from Paramecium primaurelia.